Here is a 150-residue protein sequence, read N- to C-terminus: uncharacterized protein (150 aa).

A disordered region spans residues 49–88 (KEWAENASTDEIDDFLTHDDETERDADPSSGSGPELMNKA). Basic and acidic residues predominate over residues 63 to 75 (FLTHDDETERDAD).

This is an uncharacterized protein from Bacillus subtilis (strain 168).